Here is a 404-residue protein sequence, read N- to C-terminus: Beta-ketoacyl-[acyl-carrier-protein] synthase III, chloroplastic (404 aa).

The transit peptide at 1–43 directs the protein to the chloroplast; that stretch reads MANASGFFTHPSIPNLRSRIHVPVRVSGSGFCVSNRFSKRVLC. Residues Cys-179, His-330, and Asn-360 contribute to the active site.

The protein belongs to the thiolase-like superfamily. FabH family.

It is found in the plastid. The protein resides in the chloroplast. It catalyses the reaction malonyl-[ACP] + acetyl-CoA + H(+) = 3-oxobutanoyl-[ACP] + CO2 + CoA. Its pathway is lipid metabolism; fatty acid biosynthesis. In terms of biological role, catalyzes the condensation reaction of fatty acid synthesis by the addition to an acyl acceptor of two carbons from malonyl-ACP. KAS III catalyzes the first condensation reaction which initiates fatty acid synthesis and may therefore play a role in governing the total rate of fatty acid production. Possesses both acetoacetyl-ACP synthase and acetyl transacylase activities. This is Beta-ketoacyl-[acyl-carrier-protein] synthase III, chloroplastic from Arabidopsis thaliana (Mouse-ear cress).